A 308-amino-acid chain; its full sequence is uncharacterized protein (308 aa).

The N-terminal stretch at 1-19 (MKLLLILILIINNYNLCLS) is a signal peptide. N-linked (GlcNAc...) asparagine glycans are attached at residues Asn-25 and Asn-300.

It localises to the secreted. This is an uncharacterized protein from Dictyostelium discoideum (Social amoeba).